The following is a 791-amino-acid chain: MKLNHRILLLIAPVILLSAAASSYIIYTSQKNALLKRTDSYLQLNIEKLASHYRQAQSLVSSYAFTLAKSDIIRHYFSLEKNPYRELELVDNLRETLQILQPNEKQLVSLSILNGHEELLYYAENSSDPFAELDPKVMAYIKQRFASTQKNSDISYTVNSAGEDILVRYDMLDTQTLSTPLSYNRQDVFFVVVYVVLEQFSQLRKKIEFDNQSPIFFTHSPPSYRTGLLQSVELQPGFYAILDPAPKLINAQLHSIQRELLLSFGVSALVTVLMLLLLLYRHVINPILHLDKQLEEVENNQRKNIEKLNTDDEIGRLSSRFYAMYSELHSTYQRTKALAENDHLTKLANRYQFQVQADLLLSRCYDTQHIWVMYIDLDNFKYVNDKYGHQIGDSLLVSFATHVRQLCKNFEASHNTYSIAARLSGDEFAILLVSPKRFNDCAKIFAQRLLAPIQNKDNSPLSHFPITASIGIATFPKDGEHIEKLLLNADTAMYQAKNAGKNQVAYYSQALDQIVQRRNNIERALRLGLFDQEFNLAYQPYFTCSGKRLVGFEVLLRWQSELLGEVSPEEFIPIAEQTGLFGTIDRWVISKAFQEISTLQAIVKEPIQVSINLSSAELNSLKLAQFIHRQAEQFGVSPAWIDFEITETFAADSQSFPLLHELSRLGYGLTIDDFGSGYTSITQLVQYPVQKIKFDRHFLDTLIATNKQNVIRPLIDLCHSQSMKVTAEGIESETMHQWLADYECDYMQGFYFGYPMSLSEISPWLHASNHKKKSYAQDHYCFTEPSQSECR.

The first 23 residues, 1 to 23 (MKLNHRILLLIAPVILLSAAASS), serve as a signal peptide directing secretion. Residues 24–259 (YIIYTSQKNA…NAQLHSIQRE (236 aa)) lie on the Periplasmic side of the membrane. The chain crosses the membrane as a helical span at residues 260 to 280 (LLLSFGVSALVTVLMLLLLLY). The HAMP domain maps to 281–333 (RHVINPILHLDKQLEEVENNQRKNIEKLNTDDEIGRLSSRFYAMYSELHSTYQ). At 281–791 (RHVINPILHL…FTEPSQSECR (511 aa)) the chain is on the cytoplasmic side. The region spanning 368–509 (QHIWVMYIDL…GKNQVAYYSQ (142 aa)) is the GGDEF domain. Residues 518 to 769 (RNNIERALRL…EISPWLHASN (252 aa)) enclose the EAL domain.

It is found in the cell inner membrane. Plays an essential role in the maintenance and the formation of the three-dimensional structure of the biofilms at the later stages of their development. Absence of mbaA promotes the accumulation of larger amount of biomass on the surfaces at later stage of development, results in the overproduction of an extracellular polymeric substance that accumulates in the matrix of biofilms. This yields biofilms lacking the typical structure consisting of pillars of cells separated by fluid filled channels. In Vibrio cholerae serotype O1 (strain ATCC 39315 / El Tor Inaba N16961), this protein is Biofilm architecture maintenance protein MbaA (mbaA).